Here is a 945-residue protein sequence, read N- to C-terminus: Isoleucine--tRNA ligase (945 aa).

Positions 66 to 76 match the 'HIGH' region motif; it reads PYANGDIHLGH. Glu-581 contacts L-isoleucyl-5'-AMP. The short motif at 622–626 is the 'KMSKS' region element; sequence KMSKS. Residue Lys-625 participates in ATP binding. 4 residues coordinate Zn(2+): Cys-908, Cys-911, Cys-928, and Cys-931.

This sequence belongs to the class-I aminoacyl-tRNA synthetase family. IleS type 1 subfamily. Monomer. Zn(2+) is required as a cofactor.

It localises to the cytoplasm. It carries out the reaction tRNA(Ile) + L-isoleucine + ATP = L-isoleucyl-tRNA(Ile) + AMP + diphosphate. In terms of biological role, catalyzes the attachment of isoleucine to tRNA(Ile). As IleRS can inadvertently accommodate and process structurally similar amino acids such as valine, to avoid such errors it has two additional distinct tRNA(Ile)-dependent editing activities. One activity is designated as 'pretransfer' editing and involves the hydrolysis of activated Val-AMP. The other activity is designated 'posttransfer' editing and involves deacylation of mischarged Val-tRNA(Ile). This Paraburkholderia xenovorans (strain LB400) protein is Isoleucine--tRNA ligase.